Here is a 346-residue protein sequence, read N- to C-terminus: UPF0425 pyridoxal phosphate-dependent protein MK0620 (346 aa).

An N6-(pyridoxal phosphate)lysine modification is found at K206.

The cofactor is pyridoxal 5'-phosphate.

This is UPF0425 pyridoxal phosphate-dependent protein MK0620 from Methanopyrus kandleri (strain AV19 / DSM 6324 / JCM 9639 / NBRC 100938).